A 33-amino-acid chain; its full sequence is ACKGLFVTCTPGKDECCPNHVCSSKHKWCKYKI.

Cystine bridges form between Cys2/Cys17, Cys9/Cys22, and Cys16/Cys29. Ile33 is modified (isoleucine amide).

It belongs to the neurotoxin 10 (Hwtx-1) family. 11 (haplotoxin-2) subfamily. As to expression, expressed by the venom gland.

The protein localises to the secreted. Functionally, spider venom neurotoxin that blocks voltage-gated sodium channel Nav1.3/SCN3A in human (IC(50)=80 nM) and rat (IC(50)=160 nM). Partially inhibits human Kv11.1/KCNH2/ERG (25% at 175 uM). The protein is Beta/kappa-theraphotoxin-Hlv1a of Cyriopagopus lividus (Cobalt blue tarantula).